The chain runs to 299 residues: Phosphatidylserine decarboxylase proenzyme (299 aa).

Catalysis depends on charge relay system; for autoendoproteolytic cleavage activity residues aspartate 90, histidine 147, and serine 254. Serine 254 serves as the catalytic Schiff-base intermediate with substrate; via pyruvic acid; for decarboxylase activity. A Pyruvic acid (Ser); by autocatalysis modification is found at serine 254.

Belongs to the phosphatidylserine decarboxylase family. PSD-B subfamily. Prokaryotic type I sub-subfamily. In terms of assembly, heterodimer of a large membrane-associated beta subunit and a small pyruvoyl-containing alpha subunit. The cofactor is pyruvate. In terms of processing, is synthesized initially as an inactive proenzyme. Formation of the active enzyme involves a self-maturation process in which the active site pyruvoyl group is generated from an internal serine residue via an autocatalytic post-translational modification. Two non-identical subunits are generated from the proenzyme in this reaction, and the pyruvate is formed at the N-terminus of the alpha chain, which is derived from the carboxyl end of the proenzyme. The autoendoproteolytic cleavage occurs by a canonical serine protease mechanism, in which the side chain hydroxyl group of the serine supplies its oxygen atom to form the C-terminus of the beta chain, while the remainder of the serine residue undergoes an oxidative deamination to produce ammonia and the pyruvoyl prosthetic group on the alpha chain. During this reaction, the Ser that is part of the protease active site of the proenzyme becomes the pyruvoyl prosthetic group, which constitutes an essential element of the active site of the mature decarboxylase.

It is found in the cell membrane. The catalysed reaction is a 1,2-diacyl-sn-glycero-3-phospho-L-serine + H(+) = a 1,2-diacyl-sn-glycero-3-phosphoethanolamine + CO2. It participates in phospholipid metabolism; phosphatidylethanolamine biosynthesis; phosphatidylethanolamine from CDP-diacylglycerol: step 2/2. In terms of biological role, catalyzes the formation of phosphatidylethanolamine (PtdEtn) from phosphatidylserine (PtdSer). The polypeptide is Phosphatidylserine decarboxylase proenzyme (Erwinia tasmaniensis (strain DSM 17950 / CFBP 7177 / CIP 109463 / NCPPB 4357 / Et1/99)).